We begin with the raw amino-acid sequence, 63 residues long: Large ribosomal subunit protein uL29 (63 aa).

Belongs to the universal ribosomal protein uL29 family.

The protein is Large ribosomal subunit protein uL29 of Photobacterium profundum (strain SS9).